The following is a 97-amino-acid chain: Co-chaperonin GroES (97 aa).

This sequence belongs to the GroES chaperonin family. Heptamer of 7 subunits arranged in a ring. Interacts with the chaperonin GroEL.

The protein localises to the cytoplasm. Its function is as follows. Together with the chaperonin GroEL, plays an essential role in assisting protein folding. The GroEL-GroES system forms a nano-cage that allows encapsulation of the non-native substrate proteins and provides a physical environment optimized to promote and accelerate protein folding. GroES binds to the apical surface of the GroEL ring, thereby capping the opening of the GroEL channel. This chain is Co-chaperonin GroES, found in Proteus mirabilis (strain HI4320).